The following is a 150-amino-acid chain: Large ribosomal subunit protein bL9 (150 aa).

Belongs to the bacterial ribosomal protein bL9 family.

In terms of biological role, binds to the 23S rRNA. This Corynebacterium aurimucosum (strain ATCC 700975 / DSM 44827 / CIP 107346 / CN-1) (Corynebacterium nigricans) protein is Large ribosomal subunit protein bL9.